Here is a 2788-residue protein sequence, read N- to C-terminus: Multiple epidermal growth factor-like domains protein 8 (2788 aa).

The signal sequence occupies residues 1-27 (MALGGALAAALALAFAVLGPLSHKVLA). Residues 28–2590 (GDCKGQRQVL…FFRQDQAHID (2563 aa)) are Extracellular-facing. Cystine bridges form between Cys-30-Cys-57, Cys-142-Cys-152, Cys-146-Cys-158, Cys-174-Cys-184, Cys-178-Cys-191, and Cys-193-Cys-202. In terms of domain architecture, CUB 1 spans 30–140 (CKGQRQVLRE…LGFNASFRFS (111 aa)). Asn-50 carries an N-linked (GlcNAc...) asparagine glycan. EGF-like domains lie at 138-168 (RFSL…GGPD) and 170-203 (GLQE…RACD). Kelch repeat units follow at residues 241-287 (LLAV…AVAW), 290-338 (FLVL…AGHA), 346-399 (WLYV…FHAP), 402-453 (TLLV…FHTA), 459-511 (YMVV…APPS), and 525-575 (VLLV…SRDP). PSI domains lie at 561–613 (YCSM…SDCQ), 847–899 (ACSS…ALCP), and 900–947 (LCEE…EECP). Asn-1048 carries an N-linked (GlcNAc...) asparagine glycan. The 42-residue stretch at 1074–1115 (DVDECRLGLARCHPRATCLNTPLSYECHCQRGYQGDGITHCN) folds into the EGF-like 3; calcium-binding domain. 16 disulfides stabilise this stretch: Cys-1078–Cys-1091, Cys-1085–Cys-1100, Cys-1102–Cys-1114, Cys-1163–Cys-1171, Cys-1165–Cys-1179, Cys-1182–Cys-1191, Cys-1194–Cys-1208, Cys-1211–Cys-1224, Cys-1213–Cys-1231, Cys-1233–Cys-1242, Cys-1245–Cys-1259, Cys-1263–Cys-1302, Cys-1336–Cys-1367, Cys-1407–Cys-1421, Cys-1415–Cys-1433, and Cys-1435–Cys-1444. Laminin EGF-like domains lie at 1163 to 1210 (CGCN…GCRP) and 1211 to 1261 (CQCN…SCFR). Residues 1263 to 1405 (CGGRALLTNV…WGFNASVGSA (143 aa)) form the CUB 2 domain. Asn-1271 carries N-linked (GlcNAc...) asparagine glycosylation. Thr-1353 carries the post-translational modification Phosphothreonine. The EGF-like 4 domain maps to 1403–1445 (GSARCGSGGPGSCPVPQECVPQDGAAGAGLCRCPQGWAGPHCR). Kelch repeat units follow at residues 1522-1570 (TLWM…SFHA), 1580-1626 (AMYL…HTLT), 1632-1678 (SLLL…SAVY), 1684-1734 (SLYV…HASA), 1739-1786 (TMVV…ESVA), and 1795-1840 (RLYI…WCHG). PSI domains follow at residues 1819–1859 (PCRL…PPCS), 1867–1922 (ECRR…NDCR), 2003–2061 (PCHL…ESCS), and 2063–2120 (GCAQ…LSCP). A glycan (N-linked (GlcNAc...) asparagine) is linked at Asn-2009. Positions 2121 to 2159 (PEDECANGHHDCNETQNCHDQPHGYECSCKTGYTMDNVT) constitute an EGF-like 5 domain. Cystine bridges form between Cys-2125–Cys-2138 and Cys-2132–Cys-2147. Residues Asn-2157 and Asn-2172 are each glycosylated (N-linked (GlcNAc...) asparagine). Disulfide bonds link Cys-2196-Cys-2204, Cys-2198-Cys-2213, Cys-2216-Cys-2225, and Cys-2228-Cys-2242. 2 consecutive Laminin EGF-like domains span residues 2196–2244 (CRCN…TCRP) and 2323–2386 (CQCN…QCYR). The tract at residues 2465-2507 (HTVHIQPPPPPPPPPPPADGVPRVASDLGGLGTGSGSGSPVEP) is disordered. Residues 2470 to 2483 (QPPPPPPPPPPPAD) show a composition bias toward pro residues. The chain crosses the membrane as a helical span at residues 2591–2611 (LFVFFSVFFSCFFLFLSLCVL). The Cytoplasmic segment spans residues 2612 to 2788 (LWKAKQALDQ…SQDNLTSMSL (177 aa)). Residues 2761 to 2775 (GGAGGSGHGGGGGRK) show a composition bias toward gly residues. Residues 2761 to 2788 (GGAGGSGHGGGGGRKGLLSQDNLTSMSL) form a disordered region. Residues 2779-2788 (SQDNLTSMSL) are compositionally biased toward polar residues.

As to expression, expressed in brain.

It is found in the membrane. Acts as a negative regulator of hedgehog signaling. In Rattus norvegicus (Rat), this protein is Multiple epidermal growth factor-like domains protein 8 (Megf8).